Consider the following 683-residue polypeptide: U4/U6 small nuclear ribonucleoprotein Prp3 (683 aa).

Residues 1-87 (MALSKRELDE…HSKSSSDRSR (87 aa)) form the PWI domain. A compositionally biased stretch (basic and acidic residues) spans 73-107 (GRSSRHSKSSSDRSRKRELKEVFGDDSEISKESSG). Residues 73–135 (GRSSRHSKSS…IPGPPSESPG (63 aa)) form a disordered region. Residue Lys-139 forms a Glycyl lysine isopeptide (Lys-Gly) (interchain with G-Cter in SUMO2) linkage. The tract at residues 161-183 (SFISPPAPQPKTPSSSQPERLPI) is disordered. A Phosphoserine modification is found at Ser-164. Glycyl lysine isopeptide (Lys-Gly) (interchain with G-Cter in SUMO2) cross-links involve residues Lys-244 and Lys-252. Residues 416–550 (NLVEHPAQLN…VHISVYRVRN (135 aa)) form a mediates interaction with SART3 region. Ser-619 carries the phosphoserine modification.

In terms of assembly, component of the precatalytic spliceosome (spliceosome B complex). Component of the U4/U6-U5 tri-snRNP complex, a building block of the precatalytic spliceosome (spliceosome B complex). The U4/U6-U5 tri-snRNP complex is composed of the U4, U6 and U5 snRNAs and at least PRPF3, PRPF4, PRPF6, PRPF8, PRPF31, SNRNP200, TXNL4A, SNRNP40, SNRPB, SNRPD1, SNRPD2, SNRPD3, SNRPE, SNRPF, SNRPG, DDX23, CD2BP2, PPIH, SNU13, EFTUD2, SART1 and USP39, plus LSM2, LSM3, LSM4, LSM5, LSM6, LSM7 and LSM8. Interacts directly with PRPF4. Part of a heteromeric complex containing PPIH, PRPF3 and PRPF4 that is stable in the absence of RNA. Interacts with SART3; the interaction is direct and recruits the deubiquitinase USP4 to PRPF3. Interacts with PRPF19. Interacts ('Lys-63'-linked polyubiquitinated) with PRPF8 (via the MPN (JAB/Mov34) domain); may stabilize the U4/U6-U5 tri-snRNP complex. Interacts with ERCC6. In terms of processing, ubiquitinated. Undergoes 'Lys-63'-linked polyubiquitination by PRPF19 and deubiquitination by USP4. 'Lys-63'-linked ubiquitination increases the affinity for PRPF8 and may regulate the assembly of the U4/U6-U5 tri-snRNP complex.

It localises to the nucleus. The protein localises to the nucleus speckle. Its function is as follows. Plays a role in pre-mRNA splicing as component of the U4/U6-U5 tri-snRNP complex that is involved in spliceosome assembly, and as component of the precatalytic spliceosome (spliceosome B complex). The sequence is that of U4/U6 small nuclear ribonucleoprotein Prp3 (Prpf3) from Mus musculus (Mouse).